The chain runs to 165 residues: Small ribosomal subunit protein uS5 (165 aa).

Positions 10–73 constitute an S5 DRBM domain; the sequence is QIEKLISLNR…TSARKNLRFV (64 aa).

The protein belongs to the universal ribosomal protein uS5 family. As to quaternary structure, part of the 30S ribosomal subunit. Contacts proteins S4 and S8.

In terms of biological role, with S4 and S12 plays an important role in translational accuracy. Located at the back of the 30S subunit body where it stabilizes the conformation of the head with respect to the body. This chain is Small ribosomal subunit protein uS5, found in Borreliella afzelii (strain PKo) (Borrelia afzelii).